The sequence spans 337 residues: Inositol 2-dehydrogenase 1 (337 aa).

Belongs to the Gfo/Idh/MocA family. Homotetramer.

It carries out the reaction myo-inositol + NAD(+) = scyllo-inosose + NADH + H(+). In terms of biological role, involved in the oxidation of myo-inositol (MI) to 2-keto-myo-inositol (2KMI or 2-inosose). This is Inositol 2-dehydrogenase 1 from Paenarthrobacter aurescens (strain TC1).